The sequence spans 204 residues: Ribosomal RNA small subunit methyltransferase G (204 aa).

The S-adenosyl-L-methionine site is built by glycine 73, phenylalanine 78, and arginine 139.

This sequence belongs to the methyltransferase superfamily. RNA methyltransferase RsmG family.

The protein localises to the cytoplasm. It carries out the reaction guanosine(527) in 16S rRNA + S-adenosyl-L-methionine = N(7)-methylguanosine(527) in 16S rRNA + S-adenosyl-L-homocysteine. Its function is as follows. Specifically methylates the N7 position of guanine in position 527 of 16S rRNA. In Coxiella burnetii (strain CbuG_Q212) (Coxiella burnetii (strain Q212)), this protein is Ribosomal RNA small subunit methyltransferase G.